The following is a 171-amino-acid chain: Co-chaperone protein HscB (171 aa).

The J domain occupies 2 to 74 (DYFTLFGLPA…LTRAEYLLSL (73 aa)).

It belongs to the HscB family. As to quaternary structure, interacts with HscA and stimulates its ATPase activity. Interacts with IscU.

Co-chaperone involved in the maturation of iron-sulfur cluster-containing proteins. Seems to help targeting proteins to be folded toward HscA. In Klebsiella pneumoniae subsp. pneumoniae (strain ATCC 700721 / MGH 78578), this protein is Co-chaperone protein HscB.